The sequence spans 512 residues: Cytochrome P450 monooxygenase adrA (512 aa).

Residues 12 to 32 (FEPVSLVGLVLLSGLFLLLTA) traverse the membrane as a helical segment. Asn-86, Asn-149, and Asn-210 each carry an N-linked (GlcNAc...) asparagine glycan. Residue Cys-453 participates in heme binding.

This sequence belongs to the cytochrome P450 family. Heme is required as a cofactor.

The protein localises to the membrane. It functions in the pathway secondary metabolite biosynthesis; terpenoid biosynthesis. In terms of biological role, cytochrome P450 monooxygenase; part of the gene cluster that mediates the biosynthesis of andrastins, meroterpenoid compounds that exhibit inhibitory activity against ras farnesyltransferase, suggesting that they could be promising leads for antitumor agents. The first step of the pathway is the synthesis of 3,5-dimethylorsellinic acid (DMOA) by the polyketide synthase adrD via condensation of one acetyl-CoA starter unit with 3 malonyl-CoA units and 2 methylations. DMAO is then converted to farnesyl-DMAO by the prenyltransferase adrG. The methyltransferase adrK catalyzes the methylation of the carboxyl group of farnesyl-DMAO to farnesyl-DMAO methyl ester which is further converted to epoxyfarnesyl-DMAO methyl ester by the FAD-dependent monooxygenase adrH. The terpene cyclase adrI then catalyzes the carbon skeletal rearrangement to generate the andrastin E, the first compound in the pathway having the andrastin scaffold, with the tetracyclic ring system. The post-cyclization tailoring enzymes adrF, adrE, adrJ, and adrA, are involved in the conversion of andrastin E into andrastin A. The short chain dehydrogenase adrF is responsible for the oxidation of the C-3 a hydroxyl group of andrastin E to yield the corresponding ketone, andrastin D. The ketoreductase adrE stereoselectively reduces the carbonyl moiety to reverse the stereochemistry of the C-3 position to yield andrastin F. The acetyltransferase adrJ is the acetyltransferase that attaches the acetyl group to the C-3 hydroxyl group of andrastin F to yield andrastin C. Finally, the cytochrome P450 monooxygenase adrA catalyzes two sequential oxidation reactions of the C-23 methyl group, to generate the corresponding alcohol andrastin B, and aldehyde andrastin A. The sequence is that of Cytochrome P450 monooxygenase adrA from Penicillium rubens (strain ATCC 28089 / DSM 1075 / NRRL 1951 / Wisconsin 54-1255) (Penicillium chrysogenum).